Reading from the N-terminus, the 219-residue chain is 7-cyano-7-deazaguanine synthase (219 aa).

9–19 (YSGGMDSFTVL) lines the ATP pocket. Zn(2+)-binding residues include Cys185, Cys193, Cys196, and Cys199.

The protein belongs to the QueC family. Zn(2+) is required as a cofactor.

It catalyses the reaction 7-carboxy-7-deazaguanine + NH4(+) + ATP = 7-cyano-7-deazaguanine + ADP + phosphate + H2O + H(+). Its pathway is purine metabolism; 7-cyano-7-deazaguanine biosynthesis. In terms of biological role, catalyzes the ATP-dependent conversion of 7-carboxy-7-deazaguanine (CDG) to 7-cyano-7-deazaguanine (preQ(0)). This chain is 7-cyano-7-deazaguanine synthase, found in Marinomonas sp. (strain MWYL1).